Here is a 188-residue protein sequence, read N- to C-terminus: Peptidyl-tRNA hydrolase (188 aa).

TRNA is bound at residue Tyr-16. The Proton acceptor role is filled by His-21. TRNA contacts are provided by Phe-66, Asn-68, and Asn-114.

Belongs to the PTH family. In terms of assembly, monomer.

The protein localises to the cytoplasm. The enzyme catalyses an N-acyl-L-alpha-aminoacyl-tRNA + H2O = an N-acyl-L-amino acid + a tRNA + H(+). In terms of biological role, hydrolyzes ribosome-free peptidyl-tRNAs (with 1 or more amino acids incorporated), which drop off the ribosome during protein synthesis, or as a result of ribosome stalling. Functionally, catalyzes the release of premature peptidyl moieties from peptidyl-tRNA molecules trapped in stalled 50S ribosomal subunits, and thus maintains levels of free tRNAs and 50S ribosomes. The polypeptide is Peptidyl-tRNA hydrolase (Citrifermentans bemidjiense (strain ATCC BAA-1014 / DSM 16622 / JCM 12645 / Bem) (Geobacter bemidjiensis)).